The following is a 780-amino-acid chain: Semaphorin-3G (780 aa).

Residues Met1 to Pro22 form the signal peptide. A Sema domain is found at Arg32 to Leu519. The N-linked (GlcNAc...) asparagine glycan is linked to Asn44. Cysteines 105 and 116 form a disulfide. Asn127 carries N-linked (GlcNAc...) asparagine glycosylation. Intrachain disulfides connect Cys134-Cys143, Cys270-Cys382, Cys294-Cys342, Cys522-Cys540, and Cys603-Cys655. Residues Pro569–Leu671 enclose the Ig-like C2-type domain. Asn652 is a glycosylation site (N-linked (GlcNAc...) asparagine).

It belongs to the semaphorin family. As to expression, highly expressed in lung and kidney. Weakly expressed in brain.

The protein localises to the secreted. Has chemorepulsive activities for sympathetic axons. Ligand of NRP2. The polypeptide is Semaphorin-3G (Sema3g) (Mus musculus (Mouse)).